The primary structure comprises 185 residues: Ribosome-recycling factor (185 aa).

It belongs to the RRF family.

The protein localises to the cytoplasm. Responsible for the release of ribosomes from messenger RNA at the termination of protein biosynthesis. May increase the efficiency of translation by recycling ribosomes from one round of translation to another. This Lacticaseibacillus casei (strain BL23) (Lactobacillus casei) protein is Ribosome-recycling factor.